Reading from the N-terminus, the 508-residue chain is Probable G-protein coupled receptor 101 (508 aa).

The Extracellular portion of the chain corresponds to 1-35; sequence MTSTCTNSTRESNSSHTCMPLSKMPISLAHGIIRS. N-linked (GlcNAc...) asparagine glycans are attached at residues Asn7 and Asn13. Residues 36 to 56 traverse the membrane as a helical segment; it reads TVLVIFLAASFVGNIVLALVL. Over 57–68 the chain is Cytoplasmic; the sequence is QRKPQLLQVTNR. A helical membrane pass occupies residues 69–89; it reads FIFNLLVTDLLQISLVAPWVV. Topologically, residues 90 to 106 are extracellular; sequence ATSVPLFWPLNSHFCTA. Cysteines 104 and 182 form a disulfide. A helical transmembrane segment spans residues 107–127; the sequence is LVSLTHLFAFASVNTIVVVSV. At 128-149 the chain is on the cytoplasmic side; that stretch reads DRYLSIIHPLSYPSKMTQRRGY. A helical membrane pass occupies residues 150–170; that stretch reads LLLYGTWIVAILQSTPPLYGW. The Extracellular portion of the chain corresponds to 171-196; it reads GQAAFDERNALCSMIWGASPSYTILS. A helical transmembrane segment spans residues 197 to 217; it reads VVSFIVIPLIVMIACYSVVFC. The Cytoplasmic segment spans residues 218–399; the sequence is AARRQHALLY…PRCYQCKAAK (182 aa). Positions 244–338 are disordered; the sequence is NEDEEGAEKK…ENSMKADKGR (95 aa). 2 stretches are compositionally biased toward basic and acidic residues: residues 250 to 288 and 318 to 338; these read AEKK…KAKE and MEGK…DKGR. A helical membrane pass occupies residues 400 to 420; the sequence is VIFIIIFSYVLSLGPYCFLAV. Residues 421–433 are Extracellular-facing; the sequence is LAVWVDVETQVPQ. Residues 434–454 traverse the membrane as a helical segment; the sequence is WVITIIIWLFFLQCCIHPYVY. The Cytoplasmic segment spans residues 455–508; that stretch reads GYMHKTIKKEIQDMLKKFFCKEKPPKEDSHPDLPGTEGGTEGKIVPSYDSATFP. A compositionally biased stretch (basic and acidic residues) spans 476-485; it reads EKPPKEDSHP. Residues 476 to 508 form a disordered region; the sequence is EKPPKEDSHPDLPGTEGGTEGKIVPSYDSATFP.

This sequence belongs to the G-protein coupled receptor 1 family.

The protein localises to the cell membrane. In terms of biological role, orphan receptor. The polypeptide is Probable G-protein coupled receptor 101 (GPR101) (Homo sapiens (Human)).